The chain runs to 156 residues: Small ribosomal subunit protein uS7 (156 aa).

The protein belongs to the universal ribosomal protein uS7 family. As to quaternary structure, part of the 30S ribosomal subunit. Contacts proteins S9 and S11.

One of the primary rRNA binding proteins, it binds directly to 16S rRNA where it nucleates assembly of the head domain of the 30S subunit. Is located at the subunit interface close to the decoding center, probably blocks exit of the E-site tRNA. The polypeptide is Small ribosomal subunit protein uS7 (Streptococcus equi subsp. equi (strain 4047)).